Consider the following 697-residue polypeptide: Histone-lysine N-methyltransferase SETDB2 (697 aa).

The 71-residue stretch at 172–242 (LKKENPLNLP…DNFSFSTQVQ (71 aa)) folds into the MBD domain. The region spanning 304–378 (KCCSCTDGCL…LCQNRVVQHG (75 aa)) is the Pre-SET domain. Residues Cys-306, Cys-308, Cys-312, Cys-318, Cys-320, Cys-359, Cys-363, Cys-365, and Cys-370 each coordinate Zn(2+). Residues 381–672 (LRLQVFKTDT…AGTELTWDYN (292 aa)) form the SET domain. Residue 391–393 (KGW) coordinates S-adenosyl-L-methionine. Disordered stretches follow at residues 438–461 (KEDN…HSDS) and 529–605 (VHNS…STSP). A compositionally biased stretch (low complexity) spans 565–581 (SGYVSEESSSSVISGGH). S-adenosyl-L-methionine is bound by residues Arg-626 and 629-630 (NH). 4 residues coordinate Zn(2+): Cys-632, Cys-685, Cys-687, and Cys-692.

It belongs to the class V-like SAM-binding methyltransferase superfamily.

The protein localises to the nucleus. The protein resides in the chromosome. The enzyme catalyses N(6),N(6)-dimethyl-L-lysyl(9)-[histone H3] + S-adenosyl-L-methionine = N(6),N(6),N(6)-trimethyl-L-lysyl(9)-[histone H3] + S-adenosyl-L-homocysteine + H(+). Histone methyltransferase involved in left-right axis specification in early development and mitosis. Specifically trimethylates 'Lys-9' of histone H3 (H3K9me3). H3K9me3 represents a specific tag for epigenetic transcriptional repression by recruiting HP1 (CBX1, CBX3 and/or CBX5) proteins to methylated histones. Contributes to H3K9me3 in both the interspersed repetitive elements and centromere-associated repeats. Plays a role in chromosome condensation and segregation during mitosis. The sequence is that of Histone-lysine N-methyltransferase SETDB2 (setdb2) from Xenopus tropicalis (Western clawed frog).